The sequence spans 259 residues: Histidinol-phosphatase (259 aa).

Residues glutamate 66, aspartate 82, isoleucine 84, aspartate 85, and aspartate 207 each coordinate Mg(2+). Position 66 (glutamate 66) interacts with substrate. Substrate contacts are provided by residues 84–87 (IDGT) and aspartate 207.

It belongs to the inositol monophosphatase superfamily. The cofactor is Mg(2+).

The catalysed reaction is L-histidinol phosphate + H2O = L-histidinol + phosphate. The protein operates within amino-acid biosynthesis; L-histidine biosynthesis; L-histidine from 5-phospho-alpha-D-ribose 1-diphosphate: step 8/9. Catalyzes the dephosphorylation of histidinol-phosphate to histidinol, the direct precursor of histidine. The protein is Histidinol-phosphatase (hisN) of Chlorobaculum parvum (strain DSM 263 / NCIMB 8327) (Chlorobium vibrioforme subsp. thiosulfatophilum).